We begin with the raw amino-acid sequence, 321 residues long: Phospho-N-acetylmuramoyl-pentapeptide-transferase (321 aa).

Helical transmembrane passes span 1-21 (MIFV…PVLI), 50-70 (MGGL…IIFV), 76-96 (IILL…DDYI), 112-132 (FLAQ…FHLV), 140-160 (IPFT…IVFW), 176-196 (GLAT…SFVL), 200-220 (AIGI…PYNI), 225-245 (VFMG…ISIM), 250-270 (LSLI…MLQV), and 300-320 (VVTV…WIGV).

The protein belongs to the glycosyltransferase 4 family. MraY subfamily. It depends on Mg(2+) as a cofactor.

It is found in the cell membrane. It catalyses the reaction UDP-N-acetyl-alpha-D-muramoyl-L-alanyl-gamma-D-glutamyl-L-lysyl-D-alanyl-D-alanine + di-trans,octa-cis-undecaprenyl phosphate = Mur2Ac(oyl-L-Ala-gamma-D-Glu-L-Lys-D-Ala-D-Ala)-di-trans,octa-cis-undecaprenyl diphosphate + UMP. The protein operates within cell wall biogenesis; peptidoglycan biosynthesis. Functionally, catalyzes the initial step of the lipid cycle reactions in the biosynthesis of the cell wall peptidoglycan: transfers peptidoglycan precursor phospho-MurNAc-pentapeptide from UDP-MurNAc-pentapeptide onto the lipid carrier undecaprenyl phosphate, yielding undecaprenyl-pyrophosphoryl-MurNAc-pentapeptide, known as lipid I. The chain is Phospho-N-acetylmuramoyl-pentapeptide-transferase from Staphylococcus aureus (strain MSSA476).